We begin with the raw amino-acid sequence, 158 residues long: Eukaryotic translation initiation factor 5A-1 (158 aa).

Over residues Met1 to Ser10 the composition is skewed to basic and acidic residues. The disordered stretch occupies residues Met1 to Gln21. Ser2 carries the phosphoserine modification. Lys51 carries the post-translational modification Hypusine.

Belongs to the eIF-5A family. Post-translationally, lys-51 undergoes hypusination, a unique post-translational modification that consists in the addition of a butylamino group from spermidine to lysine side chain, leading to the formation of the unusual amino acid hypusine. eIF-5As are the only known proteins to undergo this modification, which is essential for their function. Expressed in leaf vasculature and inflorescence stems. Present in xylem tissue but not in phloem, and in developing vessel members, but not in mature vessels members. Detected in anthers.

Its function is as follows. Translation factor that promotes translation elongation and termination, particularly upon ribosome stalling at specific amino acid sequence contexts. Binds between the exit (E) and peptidyl (P) site of the ribosome and promotes rescue of stalled ribosome: specifically required for efficient translation of polyproline-containing peptides as well as other motifs that stall the ribosome. Acts as a ribosome quality control (RQC) cofactor by joining the RQC complex to facilitate peptidyl transfer during CAT tailing step. Involved in xylogenesis. The chain is Eukaryotic translation initiation factor 5A-1 (ELF5A-1) from Arabidopsis thaliana (Mouse-ear cress).